The following is a 682-amino-acid chain: Potassium-transporting ATPase ATP-binding subunit (682 aa).

Transmembrane regions (helical) follow at residues 34–54 (PVMF…IAMA), 62–82 (ALFS…ANFA), 219–239 (IALT…TATL), and 254–274 (VLVA…LSAI). Catalysis depends on aspartate 307, which acts as the 4-aspartylphosphate intermediate. Residues aspartate 344, glutamate 348, 377-384 (FTAQSRMS), and lysine 395 each bind ATP. Mg(2+) contacts are provided by aspartate 518 and aspartate 522. Helical transmembrane passes span 588–608 (FAII…LNIM), 616–636 (AILS…PLAL), and 662–682 (LLVP…CGLV).

The protein belongs to the cation transport ATPase (P-type) (TC 3.A.3) family. Type IA subfamily. The system is composed of three essential subunits: KdpA, KdpB and KdpC.

It is found in the cell inner membrane. It catalyses the reaction K(+)(out) + ATP + H2O = K(+)(in) + ADP + phosphate + H(+). Functionally, part of the high-affinity ATP-driven potassium transport (or Kdp) system, which catalyzes the hydrolysis of ATP coupled with the electrogenic transport of potassium into the cytoplasm. This subunit is responsible for energy coupling to the transport system and for the release of the potassium ions to the cytoplasm. The polypeptide is Potassium-transporting ATPase ATP-binding subunit (Escherichia coli O81 (strain ED1a)).